We begin with the raw amino-acid sequence, 359 residues long: WAT1-related protein At4g16620 (359 aa).

The next 10 membrane-spanning stretches (helical) occupy residues 5–25 (ETLIEAGIIGGLAGAQVIYAG), 41–61 (LLIVILCTFASVLLITPLAFL), 77–97 (IKLVLVALAGVTLFQGLFLEG), 105–125 (MATAMPNLCPAFIFVIAWAAG), 143–163 (TVLCVMGALIMSLMHSTTATL), 183–203 (ILGCLYLLLAICGLSSSIVLQ), 206–226 (ILAEFPAPISMFSMVSLMGGI), 246–266 (VIGLGHLVGYAILGGLVSGGG), 279–299 (PVIVSLFSPIATVVCVVVSAF), and 305–325 (FNLGSFAGMALMFGGLYFVLW). The 125-residue stretch at 30–154 (LSQLLSLGID…LCVMGALIMS (125 aa)) folds into the EamA 1 domain. The 119-residue stretch at 206–324 (ILAEFPAPIS…LMFGGLYFVL (119 aa)) folds into the EamA 2 domain.

This sequence belongs to the drug/metabolite transporter (DMT) superfamily. Plant drug/metabolite exporter (P-DME) (TC 2.A.7.4) family.

The protein localises to the membrane. This Arabidopsis thaliana (Mouse-ear cress) protein is WAT1-related protein At4g16620.